Here is an 88-residue protein sequence, read N- to C-terminus: Kunitz-type U15-theraphotoxin-Hhn1i (88 aa).

Positions 1–27 (MGTARFLRAVLLLSVLLMVTFPALLSA) are cleaved as a signal peptide. Residues 28-33 (EHHDGR) constitute a propeptide that is removed on maturation. The 49-residue stretch at 37 to 85 (CRLPSDSGDCLRFFEMRYFDGTTCTKFVYGGYGGNDNRFPTEKACMKRC) folds into the BPTI/Kunitz inhibitor domain. Cystine bridges form between C37-C85 and C60-C81.

Belongs to the venom Kunitz-type family. 03 (sub-Kunitz) subfamily. As to expression, expressed by the venom gland.

It localises to the secreted. Functionally, serine protease inhibitor that inhibits trypsin at a molar ratio of 1:1. The chain is Kunitz-type U15-theraphotoxin-Hhn1i from Cyriopagopus hainanus (Chinese bird spider).